The sequence spans 446 residues: Methanogenesis regulatory protein FilR1 (446 aa).

Positions 297 to 416 (DVMIVEDDLG…QRLPEIAEEA (120 aa)) constitute a Response regulatory domain. D350 is modified (4-aspartylphosphate).

Post-translationally, phosphorylated by FilI.

Functionally, member of the two-component regulatory system FilI/FilRs, which is involved in the regulation of methanogenesis. Regulates its own expression, expression of the filI-filR2 operon, and of genes involved in methanogenesis such as acs1, acs4 and mtrABC. Acts by binding to the promoters. The protein is Methanogenesis regulatory protein FilR1 of Methanothrix harundinacea (strain 6Ac) (Methanosaeta harundinacea).